The sequence spans 234 residues: MKLTPKELDKLMLHYAGELAKQRKAKGIKLNYTEAVALISAHVMEEARAGKKSVADLMQEGRTLLKADDVMPGVAHMIHEVGIEAGFPDGTKLVTIHTPVEAGSDKLAPGEVILKNEDITLNAGKHAVQLKVKNKGDRPVQVGSHFHFFEVNKLLDFDREKAYGKRLDIASGTAVRFEPGEEKTVELIDIGGNKRIYGFNALVDRQADHDGKKLALKRAKEKHFGTINCGCDNK.

Positions 1–102 (MKLTPKELDK…LVTIHTPVEA (102 aa)) are urease gamma. The interval 103–234 (GSDKLAPGEV…GTINCGCDNK (132 aa)) is urease beta.

It in the N-terminal section; belongs to the urease gamma subunit family. In the C-terminal section; belongs to the urease beta subunit family. In terms of assembly, heterohexamer of 3 UreA (alpha) and 3 UreB (beta) subunits.

The protein localises to the cytoplasm. The enzyme catalyses urea + 2 H2O + H(+) = hydrogencarbonate + 2 NH4(+). Its pathway is nitrogen metabolism; urea degradation; CO(2) and NH(3) from urea (urease route): step 1/1. This chain is Urease subunit alpha, found in Helicobacter heilmannii.